The sequence spans 207 residues: Putative 3-methyladenine DNA glycosylase (207 aa).

This sequence belongs to the DNA glycosylase MPG family.

In Listeria monocytogenes serovar 1/2a (strain ATCC BAA-679 / EGD-e), this protein is Putative 3-methyladenine DNA glycosylase.